Consider the following 842-residue polypeptide: Protein translocase subunit SecA (842 aa).

ATP-binding positions include Gln85, 103–107, and Asp493; that span reads GEGKT. Zn(2+) is bound by residues Cys825, Cys827, Cys836, and His837.

It belongs to the SecA family. As to quaternary structure, monomer and homodimer. Part of the essential Sec protein translocation apparatus which comprises SecA, SecYEG and auxiliary proteins SecDF. Other proteins may also be involved. The cofactor is Zn(2+).

It is found in the cell membrane. The protein localises to the cytoplasm. The catalysed reaction is ATP + H2O + cellular proteinSide 1 = ADP + phosphate + cellular proteinSide 2.. Part of the Sec protein translocase complex. Interacts with the SecYEG preprotein conducting channel. Has a central role in coupling the hydrolysis of ATP to the transfer of proteins into and across the cell membrane, serving as an ATP-driven molecular motor driving the stepwise translocation of polypeptide chains across the membrane. This is Protein translocase subunit SecA from Streptococcus uberis (strain ATCC BAA-854 / 0140J).